A 248-amino-acid chain; its full sequence is PF03932 family protein CutC (248 aa).

The protein belongs to the CutC family. As to quaternary structure, homodimer.

It is found in the cytoplasm. The protein is PF03932 family protein CutC of Escherichia coli (strain 55989 / EAEC).